Here is a 125-residue protein sequence, read N- to C-terminus: MYSNLKSIGVVNYDNIDKYTLRQEGDTDILKIYFRKASRQFLAKSLKFKFPRQRKKISQDHGSSGFRNVSEIGSTLRYVLKELDSLTEHVKEEKELKVQVLEDLKHLESVVASKIKEIERKLEQM.

Belongs to the UPF0325 family.

The polypeptide is UPF0325 protein Ping_0715 (Psychromonas ingrahamii (strain DSM 17664 / CCUG 51855 / 37)).